Reading from the N-terminus, the 115-residue chain is Alpha-endosulfine (115 aa).

The span at 1–10 (MSSENLSDTQ) shows a compositional bias: polar residues. The segment at 1–27 (MSSENLSDTQMEYEDEKQDSQEKNANL) is disordered. Phosphoserine; by GWL is present on Ser-65. A disordered region spans residues 77-115 (NKQLPVAGPDKNLVTGDHIPTPQDLPQRRSSLVTSKLAG). A compositionally biased stretch (polar residues) spans 104–115 (RRSSLVTSKLAG).

This sequence belongs to the endosulfine family. In terms of processing, phosphorylation at Ser-65 by gwl during mitosis is essential for interaction with ppp2r2d (PR55-delta) and subsequent inactivation of PP2A.

The protein localises to the cytoplasm. In terms of biological role, protein phosphatase inhibitor that specifically inhibits protein phosphatase 2A (PP2A) during mitosis. When phosphorylated at Ser-67 during mitosis, specifically interacts with ppp2r2d (PR55-delta) and inhibits its activity, leading to inactivation of PP2A, an essential condition to keep cyclin-B1-CDK1 activity high during M phase. The protein is Alpha-endosulfine (ensa) of Salmo salar (Atlantic salmon).